The sequence spans 193 residues: Non-canonical purine NTP pyrophosphatase homolog (193 aa).

Belongs to the HAM1 NTPase family.

The protein is Non-canonical purine NTP pyrophosphatase homolog of Halalkalibacterium halodurans (strain ATCC BAA-125 / DSM 18197 / FERM 7344 / JCM 9153 / C-125) (Bacillus halodurans).